Here is a 298-residue protein sequence, read N- to C-terminus: tRNA pseudouridine synthase B (298 aa).

Residue D46 is the Nucleophile of the active site.

Belongs to the pseudouridine synthase TruB family. Type 1 subfamily.

The enzyme catalyses uridine(55) in tRNA = pseudouridine(55) in tRNA. Functionally, responsible for synthesis of pseudouridine from uracil-55 in the psi GC loop of transfer RNAs. This chain is tRNA pseudouridine synthase B, found in Paracoccus denitrificans (strain Pd 1222).